Here is a 556-residue protein sequence, read N- to C-terminus: 2-succinyl-5-enolpyruvyl-6-hydroxy-3-cyclohexene-1-carboxylate synthase (556 aa).

It belongs to the TPP enzyme family. MenD subfamily. As to quaternary structure, homodimer. Requires Mg(2+) as cofactor. The cofactor is Mn(2+). Thiamine diphosphate is required as a cofactor.

It catalyses the reaction isochorismate + 2-oxoglutarate + H(+) = 5-enolpyruvoyl-6-hydroxy-2-succinyl-cyclohex-3-ene-1-carboxylate + CO2. The protein operates within quinol/quinone metabolism; 1,4-dihydroxy-2-naphthoate biosynthesis; 1,4-dihydroxy-2-naphthoate from chorismate: step 2/7. It participates in quinol/quinone metabolism; menaquinone biosynthesis. Catalyzes the thiamine diphosphate-dependent decarboxylation of 2-oxoglutarate and the subsequent addition of the resulting succinic semialdehyde-thiamine pyrophosphate anion to isochorismate to yield 2-succinyl-5-enolpyruvyl-6-hydroxy-3-cyclohexene-1-carboxylate (SEPHCHC). The polypeptide is 2-succinyl-5-enolpyruvyl-6-hydroxy-3-cyclohexene-1-carboxylate synthase (Salmonella typhi).